The sequence spans 443 residues: Trigger factor (443 aa).

One can recognise a PPIase FKBP-type domain in the interval 164–249; the sequence is GDVLCVDFVG…AKSLKKAVDP (86 aa).

Belongs to the FKBP-type PPIase family. Tig subfamily.

Its subcellular location is the cytoplasm. It catalyses the reaction [protein]-peptidylproline (omega=180) = [protein]-peptidylproline (omega=0). Its function is as follows. Involved in protein export. Acts as a chaperone by maintaining the newly synthesized protein in an open conformation. Functions as a peptidyl-prolyl cis-trans isomerase. The sequence is that of Trigger factor from Gluconobacter oxydans (strain 621H) (Gluconobacter suboxydans).